Consider the following 284-residue polypeptide: Nucleotide-binding protein NMCC_0698 (284 aa).

ATP is bound at residue 8 to 15; that stretch reads GLSGSGKS. 58 to 61 serves as a coordination point for GTP; it reads DVRS.

It belongs to the RapZ-like family.

Functionally, displays ATPase and GTPase activities. This is Nucleotide-binding protein NMCC_0698 from Neisseria meningitidis serogroup C (strain 053442).